The primary structure comprises 412 residues: Argininosuccinate synthase (412 aa).

Residues 20 to 28 (AYSGGLDTS) and alanine 48 contribute to the ATP site. L-citrulline is bound by residues tyrosine 100 and serine 105. Position 130 (glycine 130) interacts with ATP. Positions 132, 136, and 137 each coordinate L-aspartate. Asparagine 136 serves as a coordination point for L-citrulline. L-citrulline is bound by residues arginine 140, serine 189, serine 198, glutamate 274, and tyrosine 286.

It belongs to the argininosuccinate synthase family. Type 1 subfamily. In terms of assembly, homotetramer.

It is found in the cytoplasm. It carries out the reaction L-citrulline + L-aspartate + ATP = 2-(N(omega)-L-arginino)succinate + AMP + diphosphate + H(+). Its pathway is amino-acid biosynthesis; L-arginine biosynthesis; L-arginine from L-ornithine and carbamoyl phosphate: step 2/3. In Shewanella pealeana (strain ATCC 700345 / ANG-SQ1), this protein is Argininosuccinate synthase.